Here is a 153-residue protein sequence, read N- to C-terminus: Glucose-6-phosphate 1-dehydrogenase (153 aa).

R21 and K120 together coordinate NADP(+). Residue K120 participates in D-glucose 6-phosphate binding.

Belongs to the glucose-6-phosphate dehydrogenase family.

It localises to the cytoplasm. The protein localises to the cytosol. The enzyme catalyses D-glucose 6-phosphate + NADP(+) = 6-phospho-D-glucono-1,5-lactone + NADPH + H(+). It participates in carbohydrate degradation; pentose phosphate pathway; D-ribulose 5-phosphate from D-glucose 6-phosphate (oxidative stage): step 1/3. In terms of biological role, cytosolic glucose-6-phosphate dehydrogenase that catalyzes the first and rate-limiting step of the oxidative branch within the pentose phosphate pathway/shunt, an alternative route to glycolysis for the dissimilation of carbohydrates and a major source of reducing power and metabolic intermediates for fatty acid and nucleic acid biosynthetic processes. This chain is Glucose-6-phosphate 1-dehydrogenase (Zw), found in Drosophila simulans (Fruit fly).